We begin with the raw amino-acid sequence, 403 residues long: tRNA pseudouridine synthase D (403 aa).

Basic and acidic residues predominate over residues 1–10 (MTVQVQDHDI). A disordered region spans residues 1 to 24 (MTVQVQDHDITTAADTAKLPQPMQ). Residue D92 is the Nucleophile of the active site. One can recognise a TRUD domain in the interval 192 to 354 (GVPNYFGPQR…IKAQRRALRL (163 aa)). The tract at residues 217-240 (ARPVPESRPQPNKGKRKRVPREQN) is disordered.

Belongs to the pseudouridine synthase TruD family.

It catalyses the reaction uridine(13) in tRNA = pseudouridine(13) in tRNA. Its function is as follows. Responsible for synthesis of pseudouridine from uracil-13 in transfer RNAs. The polypeptide is tRNA pseudouridine synthase D (Psychrobacter arcticus (strain DSM 17307 / VKM B-2377 / 273-4)).